Reading from the N-terminus, the 372-residue chain is Putative glutamate--cysteine ligase 2 (372 aa).

This sequence belongs to the glutamate--cysteine ligase type 2 family. YbdK subfamily. In terms of assembly, homodimer.

It catalyses the reaction L-cysteine + L-glutamate + ATP = gamma-L-glutamyl-L-cysteine + ADP + phosphate + H(+). Functionally, ATP-dependent carboxylate-amine ligase which exhibits weak glutamate--cysteine ligase activity. In Escherichia coli O157:H7, this protein is Putative glutamate--cysteine ligase 2 (ybdK).